A 312-amino-acid chain; its full sequence is uncharacterized protein (312 aa).

A signal peptide spans 1–28 (MNSADTQEPKSFNHTDMWTAFGTTMSGA).

The FAS-operon encodes genes involved in cytokinin production and in host plant fasciation (leafy gall). This is an uncharacterized protein from Rhodococcoides fascians (Rhodococcus fascians).